Reading from the N-terminus, the 301-residue chain is Ethylmalonyl-CoA decarboxylase (301 aa).

N6-acetyllysine; alternate is present on Lys-211. Lys-211 is subject to N6-succinyllysine; alternate. Lys-295 is modified (N6-succinyllysine).

This sequence belongs to the enoyl-CoA hydratase/isomerase family.

The protein localises to the cytoplasm. Its subcellular location is the cytosol. It catalyses the reaction (2S)-ethylmalonyl-CoA + H(+) = butanoyl-CoA + CO2. The catalysed reaction is (S)-methylmalonyl-CoA + H(+) = propanoyl-CoA + CO2. The enzyme catalyses (2R)-ethylmalonyl-CoA + H(+) = butanoyl-CoA + CO2. Functionally, decarboxylates ethylmalonyl-CoA, a potentially toxic metabolite, to form butyryl-CoA, suggesting it might be involved in metabolite proofreading. Acts preferentially on (S)-ethylmalonyl-CoA but also has some activity on the (R)-isomer. Also has methylmalonyl-CoA decarboxylase activity at lower level. In Pongo abelii (Sumatran orangutan), this protein is Ethylmalonyl-CoA decarboxylase (ECHDC1).